The following is a 695-amino-acid chain: UvrABC system protein C (695 aa).

The span at 1–10 (MNHDPAETRD) shows a compositional bias: basic and acidic residues. The tract at residues 1–44 (MNHDPAETRDTAAAPLADTESPSPVSPELTPHPAPAAQDIDTAT) is disordered. Residues 88 to 166 (TSPGVYRMLN…IKQLRPRFNV (79 aa)) enclose the GIY-YIG domain. Positions 276 to 311 (RAVKQELAVEMEKASNELEFETAALYRDRLAALSAI) constitute a UVR domain.

It belongs to the UvrC family. As to quaternary structure, interacts with UvrB in an incision complex.

It localises to the cytoplasm. Functionally, the UvrABC repair system catalyzes the recognition and processing of DNA lesions. UvrC both incises the 5' and 3' sides of the lesion. The N-terminal half is responsible for the 3' incision and the C-terminal half is responsible for the 5' incision. The protein is UvrABC system protein C of Rhodopseudomonas palustris (strain HaA2).